We begin with the raw amino-acid sequence, 465 residues long: Probable Xaa-Pro aminopeptidase pepP (465 aa).

4 residues coordinate Mn(2+): D263, D274, E397, and E437.

It belongs to the peptidase M24B family. Mn(2+) serves as cofactor.

The catalysed reaction is Release of any N-terminal amino acid, including proline, that is linked to proline, even from a dipeptide or tripeptide.. In terms of biological role, catalyzes the removal of a penultimate prolyl residue from the N-termini of peptides. This is Probable Xaa-Pro aminopeptidase pepP (pepP) from Penicillium rubens (strain ATCC 28089 / DSM 1075 / NRRL 1951 / Wisconsin 54-1255) (Penicillium chrysogenum).